A 375-amino-acid chain; its full sequence is Tryptophan dimethylallyltransferase (375 aa).

L-tryptophan-binding positions include Ile-83–Leu-84 and Glu-92. Substrate contacts are provided by Arg-103, Lys-189, and Tyr-191. Residues Tyr-193 and Arg-246 each contribute to the L-tryptophan site. Arg-259, Lys-261, Tyr-263, Gln-345, and Tyr-347 together coordinate substrate.

The protein belongs to the tryptophan dimethylallyltransferase family. Homodimer.

The enzyme catalyses L-tryptophan + dimethylallyl diphosphate = 4-(3-methylbut-2-enyl)-L-tryptophan + diphosphate. It functions in the pathway alkaloid biosynthesis; ergot alkaloid biosynthesis. Tryptophan dimethylallyltransferase; part of the gene cluster that mediates the biosynthesis of fungal ergot alkaloid. DmaW catalyzes the first step of ergot alkaloid biosynthesis by condensing dimethylallyl diphosphate (DMAP) and tryptophan to form 4-dimethylallyl-L-tryptophan. The second step is catalyzed by the methyltransferase easF that methylates 4-dimethylallyl-L-tryptophan in the presence of S-adenosyl-L-methionine, resulting in the formation of 4-dimethylallyl-L-abrine. The catalase easC and the FAD-dependent oxidoreductase easE then transform 4-dimethylallyl-L-abrine to chanoclavine-I which is further oxidized by easD in the presence of NAD(+), resulting in the formation of chanoclavine-I aldehyde. Chanoclavine-I aldehyde is the precursor of ergoamides and ergopeptines in Clavicipitaceae, and clavine-type alcaloids such as fumiclavine in Trichocomaceae. However, the metabolites downstream of chanoclavine-I aldehyde in Arthrodermataceae have not been identified yet. The sequence is that of Tryptophan dimethylallyltransferase from Trichophyton verrucosum (strain HKI 0517).